The following is a 185-amino-acid chain: Ribonuclease HII (185 aa).

The 185-residue stretch at 1–185 (MIILGIDEAG…KSYKPIQLLL (185 aa)) folds into the RNase H type-2 domain. A divalent metal cation is bound by residues aspartate 7, glutamate 8, and aspartate 99.

It belongs to the RNase HII family. Requires Mn(2+) as cofactor. Mg(2+) serves as cofactor.

Its subcellular location is the cytoplasm. It carries out the reaction Endonucleolytic cleavage to 5'-phosphomonoester.. Endonuclease that specifically degrades the RNA of RNA-DNA hybrids. This is Ribonuclease HII from Francisella philomiragia subsp. philomiragia (strain ATCC 25017 / CCUG 19701 / FSC 153 / O#319-036).